Reading from the N-terminus, the 744-residue chain is MPSGSMSGGVSGPTSPPHPTVPSRPLRPSRYVPVSAATAFLVGSTTLFFCFTCPWLSEQFSVAVPIYNGVMFMFVLANFCMATFMDPGIFPRAEEDEDKEDDFRAPLYKTVEIRGIQVRMKWCSTCRFYRPPRCSHCSVCDNCVEDFDHHCPWVNNCIGRRNYRYFFLFLLSLTAHIMGVFGFGLLFILYHTQQLDRVHSAVTMAVMCVAGLFFIPVAGLTGFHVVLVARGRTTNEQVTGKFRGGVNPFTNGCLRNVSHVLCSSQAPRYLGRKRKAQTVSVQPPFLRPQLTEAQLAAKVLDNGIQGDLHRSKSSLEMMESQSADAEPPPPPKPELRYPGLSRGPAGHSEESSLLNKAPPTPTMFKYRPTYSSPGKNHTALTHAYANQSSQQPGYRSEPSLDGREGGGAERSGAERTGGGPGGPPGSGIPGYSLGGRSYPSFSDPTVLAERASRSSSVRSTHNAPPSEATTSTSYKSLANQTPPQAARNGSLSYDSLLTPSESPDFESAAPEMSPGRPRTPVVGYSSPFLSAQIAHQREAELHQPVASSSALMASPQHAVFLRGSGSPPVPPERERERLLHDSQAQHHHHHHHHHHHHRPPRFSRPPLLSDSGPPQPSYPYRTRSTDTTHPPRSPHPPPLGKSLSYSSAAAAEMQYRLVRKASASVAGGGIQAPKDEIQMKSYSRTNGQPKPSSTPSSPTHPISVSTRPGQAHSSAGSSQSPAHKPGGGVKKVTGVGGTTYEISV.

The span at 1–11 (MPSGSMSGGVS) shows a compositional bias: gly residues. Residues 1–25 (MPSGSMSGGVSGPTSPPHPTVPSRP) form a disordered region. Topologically, residues 1 to 30 (MPSGSMSGGVSGPTSPPHPTVPSRPLRPSR) are cytoplasmic. Residues 31–51 (YVPVSAATAFLVGSTTLFFCF) traverse the membrane as a helical segment. Topologically, residues 52–61 (TCPWLSEQFS) are extracellular. Residues 62–82 (VAVPIYNGVMFMFVLANFCMA) form a helical membrane-spanning segment. Over 83 to 167 (TFMDPGIFPR…IGRRNYRYFF (85 aa)) the chain is Cytoplasmic. Residues 121 to 171 (KWCSTCRFYRPPRCSHCSVCDNCVEDFDHHCPWVNNCIGRRNYRYFFLFLL) form the DHHC domain. C151 (S-palmitoyl cysteine intermediate) is an active-site residue. A helical membrane pass occupies residues 168–188 (LFLLSLTAHIMGVFGFGLLFI). The Extracellular portion of the chain corresponds to 189–208 (LYHTQQLDRVHSAVTMAVMC). A helical membrane pass occupies residues 209–229 (VAGLFFIPVAGLTGFHVVLVA). Over 230–744 (RGRTTNEQVT…VGGTTYEISV (515 aa)) the chain is Cytoplasmic. 3 disordered regions span residues 314–523 (SLEM…PVVG), 556–645 (QHAV…SLSY), and 664–744 (SVAG…EISV). The segment covering 369-393 (TYSSPGKNHTALTHAYANQSSQQPG) has biased composition (polar residues). Residues 398 to 413 (PSLDGREGGGAERSGA) show a composition bias toward basic and acidic residues. A compositionally biased stretch (gly residues) spans 415-428 (RTGGGPGGPPGSGI). Positions 460–501 (THNAPPSEATTSTSYKSLANQTPPQAARNGSLSYDSLLTPSE) are enriched in polar residues. A compositionally biased stretch (basic and acidic residues) spans 571 to 584 (PERERERLLHDSQA). Residues 585-601 (QHHHHHHHHHHHHRPPR) show a composition bias toward basic residues. 2 stretches are compositionally biased toward low complexity: residues 621–630 (RTRSTDTTHP) and 689–723 (PKPS…SPAH). Positions 725–737 (PGGGVKKVTGVGG) are enriched in gly residues.

This sequence belongs to the DHHC palmitoyltransferase family. ERF2/ZDHHC9 subfamily.

It is found in the cell membrane. It carries out the reaction L-cysteinyl-[protein] + hexadecanoyl-CoA = S-hexadecanoyl-L-cysteinyl-[protein] + CoA. Functionally, palmitoyltransferase that catalyzes the addition of palmitate onto various protein substrates and is involved in a variety of cellular processes. The protein is Palmitoyltransferase ZDHHC5-A of Danio rerio (Zebrafish).